We begin with the raw amino-acid sequence, 355 residues long: tRNA pseudouridine synthase D (355 aa).

The active-site Nucleophile is D84. The region spanning 160-306 (GVPNYFGLQR…MAHERRILRL (147 aa)) is the TRUD domain.

The protein belongs to the pseudouridine synthase TruD family.

The enzyme catalyses uridine(13) in tRNA = pseudouridine(13) in tRNA. Its function is as follows. Responsible for synthesis of pseudouridine from uracil-13 in transfer RNAs. In Pseudomonas aeruginosa (strain ATCC 15692 / DSM 22644 / CIP 104116 / JCM 14847 / LMG 12228 / 1C / PRS 101 / PAO1), this protein is tRNA pseudouridine synthase D.